The sequence spans 116 residues: T cell receptor alpha variable 14/delta variable 4 (116 aa).

Positions Met-1–Ala-21 are cleaved as a signal peptide. The 95-residue stretch at Gln-22–Glu-116 folds into the Ig-like domain. A disulfide bridge links Cys-43 with Cys-112. Asn-78 carries N-linked (GlcNAc...) asparagine glycosylation.

In terms of assembly, alpha-beta TR is a heterodimer composed of an alpha and beta chain; disulfide-linked. The alpha-beta TR is associated with the transmembrane signaling CD3 coreceptor proteins to form the TR-CD3 (TcR or TCR). The assembly of alpha-beta TR heterodimers with CD3 occurs in the endoplasmic reticulum where a single alpha-beta TR heterodimer associates with one CD3D-CD3E heterodimer, one CD3G-CD3E heterodimer and one CD247 homodimer forming a stable octameric structure. CD3D-CD3E and CD3G-CD3E heterodimers preferentially associate with TR alpha and TR beta chains, respectively. The association of the CD247 homodimer is the last step of TcR assembly in the endoplasmic reticulum and is required for transport to the cell surface.

The protein resides in the cell membrane. V region of the variable domain of T cell receptor (TR) alpha chain that participates in the antigen recognition. Alpha-beta T cell receptors are antigen specific receptors which are essential to the immune response and are present on the cell surface of T lymphocytes. Recognize peptide-major histocompatibility (MH) (pMH) complexes that are displayed by antigen presenting cells (APC), a prerequisite for efficient T cell adaptive immunity against pathogens. Binding of alpha-beta TR to pMH complex initiates TR-CD3 clustering on the cell surface and intracellular activation of LCK that phosphorylates the ITAM motifs of CD3G, CD3D, CD3E and CD247 enabling the recruitment of ZAP70. In turn ZAP70 phosphorylates LAT, which recruits numerous signaling molecules to form the LAT signalosome. The LAT signalosome propagates signal branching to three major signaling pathways, the calcium, the mitogen-activated protein kinase (MAPK) kinase and the nuclear factor NF-kappa-B (NF-kB) pathways, leading to the mobilization of transcription factors that are critical for gene expression and essential for T cell growth and differentiation. The T cell repertoire is generated in the thymus, by V-(D)-J rearrangement. This repertoire is then shaped by intrathymic selection events to generate a peripheral T cell pool of self-MH restricted, non-autoaggressive T cells. Post-thymic interaction of alpha-beta TR with the pMH complexes shapes TR structural and functional avidity. The protein is T cell receptor alpha variable 14/delta variable 4 of Homo sapiens (Human).